The sequence spans 417 residues: Serine hydroxymethyltransferase (417 aa).

Residues Leu121 and 125 to 127 contribute to the (6S)-5,6,7,8-tetrahydrofolate site; that span reads GHL. Position 229 is an N6-(pyridoxal phosphate)lysine (Lys229). Residue 355–357 participates in (6S)-5,6,7,8-tetrahydrofolate binding; it reads SPF.

Belongs to the SHMT family. In terms of assembly, homodimer. The cofactor is pyridoxal 5'-phosphate.

It localises to the cytoplasm. It carries out the reaction (6R)-5,10-methylene-5,6,7,8-tetrahydrofolate + glycine + H2O = (6S)-5,6,7,8-tetrahydrofolate + L-serine. The protein operates within one-carbon metabolism; tetrahydrofolate interconversion. It participates in amino-acid biosynthesis; glycine biosynthesis; glycine from L-serine: step 1/1. In terms of biological role, catalyzes the reversible interconversion of serine and glycine with tetrahydrofolate (THF) serving as the one-carbon carrier. This reaction serves as the major source of one-carbon groups required for the biosynthesis of purines, thymidylate, methionine, and other important biomolecules. Also exhibits THF-independent aldolase activity toward beta-hydroxyamino acids, producing glycine and aldehydes, via a retro-aldol mechanism. The chain is Serine hydroxymethyltransferase from Xanthomonas axonopodis pv. citri (strain 306).